The following is a 192-amino-acid chain: Thymidine kinase (192 aa).

Residues 9–16 (STMNAGKS) and 87–90 (DEAQ) contribute to the ATP site. Glutamate 88 functions as the Proton acceptor in the catalytic mechanism. Zn(2+) is bound by residues cysteine 145, cysteine 147, cysteine 182, and histidine 185.

This sequence belongs to the thymidine kinase family. As to quaternary structure, homotetramer.

It is found in the cytoplasm. It catalyses the reaction thymidine + ATP = dTMP + ADP + H(+). In Pasteurella multocida (strain Pm70), this protein is Thymidine kinase.